Consider the following 189-residue polypeptide: Protein sisterless A (189 aa).

Positions 93–124 (DCRGSGSGSGSGSGSDVKDAQRQRAESCRKSR) are disordered. The segment covering 108–121 (DVKDAQRQRAESCR) has biased composition (basic and acidic residues).

As to quaternary structure, homodimer. Interacts with dpn (via bHLH motif). Interacts with da (via bHLH motif). Interacts with Bap60. In terms of tissue distribution, localizes to all the embryonic nuclei until nuclear cycle 9, when expression ceases in the prepole cell nuclei. Associates with the somatic nuclei through cycle 10. By nuclear cycle 12, distributes uniformly in the somatic portion of the embryo and no longer associates with the nuclei. After early cycle 14 (beginning of cellularization) there is very little or no expression in the periphery of the embryo or in either the somatic or germ cells. In the yolk, accumulates at the nuclei from nuclear cycle 8 until 10-11 hours after fertilization.

The protein localises to the nucleus. Involved in sex determination and dosage compensation. Required for proper expression of Sxl in embryonic somatic cells. Also has an essential function in the yolk nuclei. Involved in endoderm migration and midgut formation. This chain is Protein sisterless A (sisA), found in Drosophila melanogaster (Fruit fly).